Consider the following 1262-residue polypeptide: Tau-tubulin kinase homolog Asator (1262 aa).

A disordered region spans residues 13-35 (NASAPDDGNQSCQPSSKQDQYLS). Over residues 20 to 35 (GNQSCQPSSKQDQYLS) the composition is skewed to polar residues. Residues 173-436 (WKVVRKIGGG…MLIGLFERCM (264 aa)) enclose the Protein kinase domain. Residues 179–187 (IGGGGFGEI) and Lys202 contribute to the ATP site. The Proton acceptor role is filled by Asp293. Disordered regions lie at residues 662 to 724 (TVTN…TSNA), 755 to 792 (RSAT…ARSS), and 984 to 1003 (KDSA…SRHR). Residues 667-679 (KTSEVNRSTEEQK) show a composition bias toward basic and acidic residues. Residues 755 to 776 (RSATSTNLRPSSSASQRINSGS) show a composition bias toward polar residues.

Belongs to the protein kinase superfamily. CK1 Ser/Thr protein kinase family. As to quaternary structure, interacts with Mgtor. The cofactor is Mg(2+). In terms of tissue distribution, detected in larval brain.

It is found in the cytoplasm. It localises to the cytoskeleton. The protein resides in the spindle. The catalysed reaction is L-seryl-[protein] + ATP = O-phospho-L-seryl-[protein] + ADP + H(+). It catalyses the reaction L-threonyl-[protein] + ATP = O-phospho-L-threonyl-[protein] + ADP + H(+). In terms of biological role, probable serine/threonine protein kinase. The sequence is that of Tau-tubulin kinase homolog Asator from Drosophila melanogaster (Fruit fly).